The sequence spans 269 residues: Polyhedrin (269 aa).

Functionally, major component of the virus occlusion bodies, which are large proteinaceous structures (polyhedra), that protect the virus from the outside environment for extended periods until they are ingested by insect larvae. This Euxoa scandens cypovirus (EsCPV) protein is Polyhedrin.